Consider the following 343-residue polypeptide: Aspartate carbamoyltransferase catalytic subunit (343 aa).

Residues R71 and T72 each contribute to the carbamoyl phosphate site. K99 is an L-aspartate binding site. 3 residues coordinate carbamoyl phosphate: R121, H149, and Q152. R195 and R249 together coordinate L-aspartate. 2 residues coordinate carbamoyl phosphate: G290 and P291.

This sequence belongs to the aspartate/ornithine carbamoyltransferase superfamily. ATCase family. Heterododecamer (2C3:3R2) of six catalytic PyrB chains organized as two trimers (C3), and six regulatory PyrI chains organized as three dimers (R2).

The enzyme catalyses carbamoyl phosphate + L-aspartate = N-carbamoyl-L-aspartate + phosphate + H(+). Its pathway is pyrimidine metabolism; UMP biosynthesis via de novo pathway; (S)-dihydroorotate from bicarbonate: step 2/3. Its function is as follows. Catalyzes the condensation of carbamoyl phosphate and aspartate to form carbamoyl aspartate and inorganic phosphate, the committed step in the de novo pyrimidine nucleotide biosynthesis pathway. The sequence is that of Aspartate carbamoyltransferase catalytic subunit from Rhodopirellula baltica (strain DSM 10527 / NCIMB 13988 / SH1).